Reading from the N-terminus, the 310-residue chain is MEILNEPSSTYHQPVLLEESLQGLAIQPDGIYIDTTFGGGGHAKAILAQLKRGKLFAFDQDEDAESIASTWHDPNFTFIRANSRFIQRFLAYHQIEKIDGLIADLGVSSYQIDTALRGFSTRSEGPLDMRMDQSSSLTASQIVNTYSFEALTQLFRTYGELHSAPALAKALIAARTKHPIETTQSLKEIALPFSPPRKSAKFLAQVFQALRIEVNDELGALKSLLEQSLQLLKPGGRLVIISYHSLEDRLVKRFIKTGNFEGELDKDMYGNPLQPFVPVYKKAIVPTEEELVINSRSRSAKLRVGERTAL.

S-adenosyl-L-methionine is bound by residues 40-42, Asp59, Phe89, Asp104, and Gln111; that span reads GGH.

It belongs to the methyltransferase superfamily. RsmH family.

It is found in the cytoplasm. The enzyme catalyses cytidine(1402) in 16S rRNA + S-adenosyl-L-methionine = N(4)-methylcytidine(1402) in 16S rRNA + S-adenosyl-L-homocysteine + H(+). In terms of biological role, specifically methylates the N4 position of cytidine in position 1402 (C1402) of 16S rRNA. This is Ribosomal RNA small subunit methyltransferase H from Amoebophilus asiaticus (strain 5a2).